A 343-amino-acid polypeptide reads, in one-letter code: Putative dihydroflavonol 4-reductase (343 aa).

NADP(+) is bound at residue tyrosine 150.

Belongs to the NAD(P)-dependent epimerase/dehydratase family. Dihydroflavonol-4-reductase subfamily.

The enzyme catalyses a (2R,3S,4S)-leucoanthocyanidin + NADP(+) = a (2R,3R)-dihydroflavonol + NADPH + H(+). Its pathway is secondary metabolite biosynthesis; flavonoid biosynthesis. This is Putative dihydroflavonol 4-reductase (dfrA) from Synechocystis sp. (strain ATCC 27184 / PCC 6803 / Kazusa).